Reading from the N-terminus, the 337-residue chain is Ribosomal RNA small subunit methyltransferase C (337 aa).

Belongs to the methyltransferase superfamily. RsmC family. Monomer.

The protein resides in the cytoplasm. The enzyme catalyses guanosine(1207) in 16S rRNA + S-adenosyl-L-methionine = N(2)-methylguanosine(1207) in 16S rRNA + S-adenosyl-L-homocysteine + H(+). In terms of biological role, specifically methylates the guanine in position 1207 of 16S rRNA in the 30S particle. The sequence is that of Ribosomal RNA small subunit methyltransferase C from Acinetobacter baumannii (strain ACICU).